The chain runs to 98 residues: Co-chaperonin GroES (98 aa).

The protein belongs to the GroES chaperonin family. In terms of assembly, heptamer of 7 subunits arranged in a ring. Interacts with the chaperonin GroEL.

It localises to the cytoplasm. Together with the chaperonin GroEL, plays an essential role in assisting protein folding. The GroEL-GroES system forms a nano-cage that allows encapsulation of the non-native substrate proteins and provides a physical environment optimized to promote and accelerate protein folding. GroES binds to the apical surface of the GroEL ring, thereby capping the opening of the GroEL channel. The chain is Co-chaperonin GroES from Renibacterium salmoninarum (strain ATCC 33209 / DSM 20767 / JCM 11484 / NBRC 15589 / NCIMB 2235).